Consider the following 432-residue polypeptide: Amino acid transporter ANT1 (432 aa).

A disordered region spans residues 1–30 (MAIKDLTATTGDSSLPLIKSPPSETTGGDR). Over 1–35 (MAIKDLTATTGDSSLPLIKSPPSETTGGDRTSALQ) the chain is Cytoplasmic. Residues 36–56 (TLGNIIVSIVGTGVLGLPYAF) traverse the membrane as a helical segment. Residues 57-62 (RIAGWL) are Lumenal-facing. The helical transmembrane segment at 63-83 (AGSLGVIIVGFATYYCMLLLI) threads the bilayer. At 84 to 115 (QCRDKLESEEGEEESKTYGDLGFKCMGTKGRY) the chain is on the cytoplasmic side. A helical transmembrane segment spans residues 116–136 (LTEFLIFTAQCGGSVAYLVFI). The Lumenal portion of the chain corresponds to 137-147 (GRNLSSIFSSY). A helical membrane pass occupies residues 148–168 (GLSMVSFILILVPIEVGLSWI). At 169–172 (TSLS) the chain is on the cytoplasmic side. Residues 173–193 (ALSPFSIFADICNIIAMCFVV) traverse the membrane as a helical segment. Residues 194–219 (KENVEMVIEGDFSFSDRTAISSTIGG) lie on the Lumenal side of the membrane. A helical membrane pass occupies residues 220-240 (LPFAGGVAVFCFEGFAMTLAL). Topologically, residues 241–256 (ESSMREREAFPKLLAK) are cytoplasmic. Residues 257–277 (VLAGITFVYVLFGFCGYMAYG) traverse the membrane as a helical segment. The Lumenal segment spans residues 278–292 (DQTKDIITLNLPNNW). Residues 293–313 (SAIAVQIGLCVGLTFTFPIMV) traverse the membrane as a helical segment. Over 314 to 353 (HPLNEIIEQKLKRIDWLQKHHNGYSNETGSVSKFAIFTTR) the chain is Cytoplasmic. Residues 354–374 (TLLVVGLAAIASLVPGFGTFA) form a helical membrane-spanning segment. The Lumenal portion of the chain corresponds to 375 to 379 (SLVGS). Residues 380 to 400 (TLCALISFVLPASYHLTLLGP) traverse the membrane as a helical segment. Residues 401–410 (SLNVWNKSID) are Cytoplasmic-facing. The helical transmembrane segment at 411 to 431 (VFIVICGLIFAVYGTYNTIVG) threads the bilayer. Residue V432 is a topological domain, lumenal.

It belongs to the amino acid/polyamine transporter 2 family. Amino acid/auxin permease (AAAP) (TC 2.A.18.8) subfamily. In terms of tissue distribution, ubiquitous. Highly expressed in flowers and cauline leaves and at lower levels in stems, leaves and roots.

Its subcellular location is the endoplasmic reticulum membrane. Functionally, translocates aromatic and neutral amino acids such as tyrosine, tryptophan, phenylalanine, histidine, proline, leucine, valine, glutamine, as well as arginine. Transports the auxins indole-3-acetic acid (IAA) and 2,4-dichlorophenoxyacetic acid (2,4-D). The polypeptide is Amino acid transporter ANT1 (Arabidopsis thaliana (Mouse-ear cress)).